The following is a 261-amino-acid chain: Proteasome subunit beta type-2 (261 aa).

Residues 1 to 29 (MAGLSFDNYQRNNFLAENSHTQPKATSTG) constitute a propeptide, removed in mature form. Residue threonine 30 is the Nucleophile of the active site.

It belongs to the peptidase T1B family. The 26S proteasome consists of a 20S proteasome core and two 19S regulatory subunits. The 20S proteasome core is composed of 28 subunits that are arranged in four stacked rings, resulting in a barrel-shaped structure. The two end rings are each formed by seven alpha subunits, and the two central rings are each formed by seven beta subunits. The catalytic chamber with the active sites is on the inside of the barrel.

Its subcellular location is the cytoplasm. It is found in the nucleus. It catalyses the reaction Cleavage of peptide bonds with very broad specificity.. The proteasome degrades poly-ubiquitinated proteins in the cytoplasm and in the nucleus. It is essential for the regulated turnover of proteins and for the removal of misfolded proteins. The proteasome is a multicatalytic proteinase complex that is characterized by its ability to cleave peptides with Arg, Phe, Tyr, Leu, and Glu adjacent to the leaving group at neutral or slightly basic pH. It has an ATP-dependent proteolytic activity. The protein is Proteasome subunit beta type-2 (PUP1) of Saccharomyces cerevisiae (strain ATCC 204508 / S288c) (Baker's yeast).